The chain runs to 345 residues: Holliday junction branch migration complex subunit RuvB (345 aa).

The segment at 4 to 194 (TDKLFGAAPE…FGIVARLEFY (191 aa)) is large ATPase domain (RuvB-L). Residues L33, R34, G75, K78, T79, T80, 141–143 (EDY), R184, Y194, and R231 each bind ATP. T79 contacts Mg(2+). The small ATPAse domain (RuvB-S) stretch occupies residues 195-265 (NAEELTRIVS…VADAALAMLD (71 aa)). The segment at 268-345 (PAGLDVMDRK…LHFGLPVKDA (78 aa)) is head domain (RuvB-H). DNA-binding residues include R323 and R328.

This sequence belongs to the RuvB family. As to quaternary structure, homohexamer. Forms an RuvA(8)-RuvB(12)-Holliday junction (HJ) complex. HJ DNA is sandwiched between 2 RuvA tetramers; dsDNA enters through RuvA and exits via RuvB. An RuvB hexamer assembles on each DNA strand where it exits the tetramer. Each RuvB hexamer is contacted by two RuvA subunits (via domain III) on 2 adjacent RuvB subunits; this complex drives branch migration. In the full resolvosome a probable DNA-RuvA(4)-RuvB(12)-RuvC(2) complex forms which resolves the HJ.

It localises to the cytoplasm. It carries out the reaction ATP + H2O = ADP + phosphate + H(+). The RuvA-RuvB-RuvC complex processes Holliday junction (HJ) DNA during genetic recombination and DNA repair, while the RuvA-RuvB complex plays an important role in the rescue of blocked DNA replication forks via replication fork reversal (RFR). RuvA specifically binds to HJ cruciform DNA, conferring on it an open structure. The RuvB hexamer acts as an ATP-dependent pump, pulling dsDNA into and through the RuvAB complex. RuvB forms 2 homohexamers on either side of HJ DNA bound by 1 or 2 RuvA tetramers; 4 subunits per hexamer contact DNA at a time. Coordinated motions by a converter formed by DNA-disengaged RuvB subunits stimulates ATP hydrolysis and nucleotide exchange. Immobilization of the converter enables RuvB to convert the ATP-contained energy into a lever motion, pulling 2 nucleotides of DNA out of the RuvA tetramer per ATP hydrolyzed, thus driving DNA branch migration. The RuvB motors rotate together with the DNA substrate, which together with the progressing nucleotide cycle form the mechanistic basis for DNA recombination by continuous HJ branch migration. Branch migration allows RuvC to scan DNA until it finds its consensus sequence, where it cleaves and resolves cruciform DNA. The chain is Holliday junction branch migration complex subunit RuvB from Chromobacterium violaceum (strain ATCC 12472 / DSM 30191 / JCM 1249 / CCUG 213 / NBRC 12614 / NCIMB 9131 / NCTC 9757 / MK).